The chain runs to 554 residues: Chaperonin GroEL (554 aa).

ATP contacts are provided by residues 29 to 32 (TLGP), Lys-50, 86 to 90 (DGTTT), Gly-418, and Asp-499. The interval 528–554 (HEEDNNTNRSGGGVGGGHHGGMGGMDF) is disordered. The span at 537-554 (SGGGVGGGHHGGMGGMDF) shows a compositional bias: gly residues.

This sequence belongs to the chaperonin (HSP60) family. In terms of assembly, forms a cylinder of 14 subunits composed of two heptameric rings stacked back-to-back. Interacts with the co-chaperonin GroES.

It localises to the cytoplasm. The enzyme catalyses ATP + H2O + a folded polypeptide = ADP + phosphate + an unfolded polypeptide.. Together with its co-chaperonin GroES, plays an essential role in assisting protein folding. The GroEL-GroES system forms a nano-cage that allows encapsulation of the non-native substrate proteins and provides a physical environment optimized to promote and accelerate protein folding. The sequence is that of Chaperonin GroEL from Orientia tsutsugamushi (strain Boryong) (Rickettsia tsutsugamushi).